We begin with the raw amino-acid sequence, 478 residues long: MTLSFVTRWRDELPETYTALSPTPLNNARLVWHNTELANTLSIPSSLFKNGAGVWGGEALLPGMSPLAQVYSGHQFGVWAGQLGDGRGILLGEQLLADGTTMDWHLKGAGLTPYSRMGDGRAVLRSTIRESLASEAMHYLGIPTTRALSIVTSDSPVYRETAEPGAMLMRVAPSHLRFGHFEHFYYRRESEKVRQLADFAIRHYWSHLEDDEDKYRLWFSDVVARTASLIAQWQTVGFAHGVMNTDNMSLLGLTLDYGPFGFLDDYEPGFICNHSDHQGRYSFDNQPAVALWNLQRLAQTLSPFVAVDALNEALDSYQQVLLTHYGQRMRQKLGFMTEQKEDNALLNELFSLMARERSDYTRTFRMLSLTEQHSAASPLRDEFIDRAAFDDWFARYRGRLQQDEVSDSERQQLMQSVNPALVLRNWLAQRAIEAAEKGDMMELHRLHEALRNPFSDRDDDYVSRPPDWGKRLEVSCSS.

Residues Gly84, Gly86, Arg87, Lys107, Asp119, Gly120, Arg170, and Arg177 each contribute to the ATP site. Asp246 serves as the catalytic Proton acceptor. Mg(2+) contacts are provided by Asn247 and Asp256. Residue Asp256 participates in ATP binding.

Belongs to the SELO family. Mg(2+) is required as a cofactor. It depends on Mn(2+) as a cofactor.

The catalysed reaction is L-seryl-[protein] + ATP = 3-O-(5'-adenylyl)-L-seryl-[protein] + diphosphate. It catalyses the reaction L-threonyl-[protein] + ATP = 3-O-(5'-adenylyl)-L-threonyl-[protein] + diphosphate. The enzyme catalyses L-tyrosyl-[protein] + ATP = O-(5'-adenylyl)-L-tyrosyl-[protein] + diphosphate. It carries out the reaction L-histidyl-[protein] + UTP = N(tele)-(5'-uridylyl)-L-histidyl-[protein] + diphosphate. The catalysed reaction is L-seryl-[protein] + UTP = O-(5'-uridylyl)-L-seryl-[protein] + diphosphate. It catalyses the reaction L-tyrosyl-[protein] + UTP = O-(5'-uridylyl)-L-tyrosyl-[protein] + diphosphate. Its function is as follows. Nucleotidyltransferase involved in the post-translational modification of proteins. It can catalyze the addition of adenosine monophosphate (AMP) or uridine monophosphate (UMP) to a protein, resulting in modifications known as AMPylation and UMPylation. The polypeptide is Protein nucleotidyltransferase YdiU (Shigella boydii serotype 18 (strain CDC 3083-94 / BS512)).